Here is a 573-residue protein sequence, read N- to C-terminus: Sulfate adenylyltransferase (573 aa).

The tract at residues 1-169 (MSNPPHGGVL…LEAVNKLQHY (169 aa)) is N-terminal. Residues 170-394 (DFVDLRYSPA…LRESHPPRSQ (225 aa)) form a catalytic region. Residue glutamine 197 participates in sulfate binding. ATP is bound by residues 197–200 (QTRN) and 291–294 (GRDH). Residues threonine 198, arginine 199, and asparagine 200 contribute to the active site. Arginine 199 is a binding site for sulfate. Sulfate is bound at residue alanine 295. Position 333 (methionine 333) interacts with ATP. An allosteric regulation domain; adenylyl-sulfate kinase-like region spans residues 395 to 573 (QGFTVLFTGY…LESQGLLDRF (179 aa)). 3'-phosphoadenylyl sulfate-binding positions include 434 to 437 (ENIR), arginine 451, 477 to 478 (IA), and arginine 515.

This sequence in the N-terminal section; belongs to the sulfate adenylyltransferase family. In the C-terminal section; belongs to the APS kinase family. In terms of assembly, homohexamer. Dimer of trimers.

The protein localises to the cytoplasm. It carries out the reaction sulfate + ATP + H(+) = adenosine 5'-phosphosulfate + diphosphate. It participates in sulfur metabolism; hydrogen sulfide biosynthesis; sulfite from sulfate: step 1/3. Its activity is regulated as follows. Allosterically inhibited by 3'-phosphoadenosine 5'-phosphosulfate (PAPS). Functionally, catalyzes the first intracellular reaction of sulfate assimilation, forming adenosine-5'-phosphosulfate (APS) from inorganic sulfate and ATP. Plays an important role in sulfate activation as a component of the biosynthesis pathway of sulfur-containing amino acids. In Neurospora crassa (strain ATCC 24698 / 74-OR23-1A / CBS 708.71 / DSM 1257 / FGSC 987), this protein is Sulfate adenylyltransferase (cys-11).